Here is a 604-residue protein sequence, read N- to C-terminus: ATPase family AAA domain-containing protein 3A homolog (604 aa).

The interval 1-50 (MSWLLGRNRQQPQPDQTAGFSEGGGAADPEGRTAGEKSGDSQLSRAERKA) is disordered. The segment covering 8 to 19 (NRQQPQPDQTAG) has biased composition (polar residues). Residues 29–50 (PEGRTAGEKSGDSQLSRAERKA) are compositionally biased toward basic and acidic residues. The stretch at 62-221 (ERAADAAKTL…INLEKIRLKA (160 aa)) forms a coiled coil. 358–365 (GPPGTGKT) is a binding site for ATP.

Can form homooligomers.

The protein resides in the mitochondrion inner membrane. It localises to the mitochondrion matrix. The protein localises to the mitochondrion nucleoid. Its function is as follows. Required to maintain the proper number of mitochondria in neurons and muscles. The protein is ATPase family AAA domain-containing protein 3A homolog of Drosophila melanogaster (Fruit fly).